We begin with the raw amino-acid sequence, 397 residues long: UDP-galactose translocator (397 aa).

A disordered region spans residues 1 to 21; sequence MAAVGSGGSNAAAGPGAVSAG. Helical transmembrane passes span 3–23, 37–57, 65–85, 97–117, 140–160, 169–189, 200–220, 238–258, 269–289, and 315–335; these read AVGSGGSNAAAGPGAVSAGSL, YISLAVLVVQNASLILSIRYA, FFATTAVVMAEVLKGLTCLLL, LALFLHEAVLVQYVDTLKLAV, TFQVTYQLKILTTALFSVLML, WASLLLLFTGVAIVQAQQAGG, GAGLAAVVASCLSSGFAGVYF, LGLFGTALGLVGLWWAEGTAV, PAVWGVVLNQAFGGLLVAVVV, and LFGFHVDPLFALGAGLVIGAV. Positions 9 to 21 are enriched in low complexity; the sequence is SNAAAGPGAVSAG. The segment at 355-397 is disordered; that stretch reads ASASTSGPCTHQQPPGQPPPPKLSSHRADLSTEPFLPKSVLVK.

The protein belongs to the nucleotide-sugar transporter family. SLC35A subfamily. In terms of assembly, interacts with SLC35A3; the interaction is reduced in the presence of SLC35A4. Found in a complex with SLC35A3 and SLC35A4.

It localises to the golgi apparatus membrane. It catalyses the reaction UMP(out) + UDP-alpha-D-galactose(in) = UMP(in) + UDP-alpha-D-galactose(out). It carries out the reaction UDP-N-acetyl-alpha-D-galactosamine(in) + UMP(out) = UDP-N-acetyl-alpha-D-galactosamine(out) + UMP(in). The enzyme catalyses UMP(out) + UDP-alpha-D-glucose(in) = UMP(in) + UDP-alpha-D-glucose(out). The catalysed reaction is UMP(out) + UDP-N-acetyl-alpha-D-glucosamine(in) = UMP(in) + UDP-N-acetyl-alpha-D-glucosamine(out). It catalyses the reaction UDP-alpha-D-galactose(in) + AMP(out) = UDP-alpha-D-galactose(out) + AMP(in). It carries out the reaction UDP-alpha-D-galactose(in) + CMP(out) = UDP-alpha-D-galactose(out) + CMP(in). The enzyme catalyses UDP-N-acetyl-alpha-D-galactosamine(out) + UDP-alpha-D-galactose(in) = UDP-N-acetyl-alpha-D-galactosamine(in) + UDP-alpha-D-galactose(out). The catalysed reaction is UDP-N-acetyl-alpha-D-glucosamine(out) + UDP-alpha-D-galactose(in) = UDP-N-acetyl-alpha-D-glucosamine(in) + UDP-alpha-D-galactose(out). It catalyses the reaction UDP-alpha-D-galactose(in) + UDP-alpha-D-glucose(out) = UDP-alpha-D-galactose(out) + UDP-alpha-D-glucose(in). It carries out the reaction UMP(out) + CMP(in) = UMP(in) + CMP(out). The enzyme catalyses UMP(out) + AMP(in) = UMP(in) + AMP(out). Functionally, transports uridine diphosphate galactose (UDP-galactose) from the cytosol into the Golgi apparatus, functioning as an antiporter that exchanges UDP-galactose for UMP. It is also able to exchange UDP-galactose for AMP and CMP, and to transport UDP-N-acetylgalactosamine (UDP-GalNAc) and other nucleotide sugars. As a provider of UDP-galactose to galactosyltransferases present in the Golgi apparatus, it is necessary for globotriaosylceramide/globoside (Gb3Cer) synthesis from lactosylceramide. The protein is UDP-galactose translocator of Canis lupus familiaris (Dog).